The sequence spans 107 residues: U1-lycotoxin-Ls1o (107 aa).

A signal peptide spans 1–20 (MMKVLVVVALLVTLISYSSS). Positions 21-41 (EGIDDLEADELLSLMANEQTR) are excised as a propeptide. 4 cysteine pairs are disulfide-bonded: C44/C59, C51/C68, C58/C86, and C70/C84.

It belongs to the neurotoxin 19 (CSTX) family. 04 (U1-Lctx) subfamily. As to expression, expressed by the venom gland.

It localises to the secreted. In Lycosa singoriensis (Wolf spider), this protein is U1-lycotoxin-Ls1o.